A 338-amino-acid polypeptide reads, in one-letter code: Phenylalanine--tRNA ligase alpha subunit (338 aa).

Glutamate 253 contributes to the Mg(2+) binding site.

This sequence belongs to the class-II aminoacyl-tRNA synthetase family. Phe-tRNA synthetase alpha subunit type 1 subfamily. As to quaternary structure, tetramer of two alpha and two beta subunits. Requires Mg(2+) as cofactor.

It localises to the cytoplasm. It catalyses the reaction tRNA(Phe) + L-phenylalanine + ATP = L-phenylalanyl-tRNA(Phe) + AMP + diphosphate + H(+). The sequence is that of Phenylalanine--tRNA ligase alpha subunit from Geotalea uraniireducens (strain Rf4) (Geobacter uraniireducens).